We begin with the raw amino-acid sequence, 343 residues long: Transmembrane protein 120A (343 aa).

Over 1–132 the chain is Cytoplasmic; it reads MQPPPPGPLG…KQAKFAYKDE (132 aa). Residue Lys-130 coordinates CoA. A helical membrane pass occupies residues 133 to 152; that stretch reads YEKFKLYLTIILILISFTCR. The Extracellular segment spans residues 153 to 158; the sequence is FLLNSR. Residues 159–177 form a helical membrane-spanning segment; it reads VTDAAFNFLLVWYYCTLTI. The Cytoplasmic portion of the chain corresponds to 178–190; it reads RESILINNGSRIK. CoA contacts are provided by Ser-187 and Arg-188. Residues 191–209 form a helical membrane-spanning segment; sequence GWWVFHHYVSTFLSGVMLT. Over 210–218 the chain is Extracellular; the sequence is WPDGLMYQK. A helical transmembrane segment spans residues 219–240; sequence FRNQFLSFSMYQSFVQFLQYYY. Gln-237, Tyr-240, Gln-241, and His-283 together coordinate CoA. At 241 to 270 the chain is on the cytoplasmic side; it reads QSGCLYRLRALGERHTMDLTVEGFQSWMWR. The helical transmembrane segment at 271–294 threads the bilayer; it reads GLTFLLPFLFFGHFWQLFNALTLF. Residues 295-304 are Extracellular-facing; sequence NLAQDPQCKE. The chain crosses the membrane as a helical span at residues 305–330; the sequence is WQVLMCGFPFLLLFLGNFFTTLRVVH. The Cytoplasmic portion of the chain corresponds to 331–343; that stretch reads HKFHSQRHGSKKD. A CoA-binding site is contributed by Lys-332.

Belongs to the TMEM120 family. Homodimer. Forms heterooligomer with TMEM120B. Interacts with PKD2; TMEM120A inhibits PKD2 channel activity through the physical association of PKD2 with TMEM120A. Interacts (via C-terminal domain) with STING1; regulates the trafficking of STING1 from the ER to the ER-Golgi intermediate compartment to elicit antiviral effects. Expressed in nociceptors.

It is found in the cell membrane. It localises to the nucleus inner membrane. Its subcellular location is the endoplasmic reticulum. Functionally, multifunctional protein involved in mechanosensation, and plays an essential role in lipid metabolism and adipocyte differentiation. May function as a potential ion channel involved in sensing mechanical stimuli. Mediates the mechanosensitivity of the PKD2-TMEM120A channel complex through direct physical interaction. TMEM120A seems to affect mechanosensation by inhibiting PIEZO2 channels, possibly by altering cellular lipid content. TMEM120A is structurally similar to a lipid-modifying enzyme, ELOVL7, and contains a bound coenzyme A molecule, which suggests it might function as an enzyme in lipid metabolism. Additionnaly, implicated in innate immune response against Zika virus. Acts as a key activator of the antiviral signaling involving STING1. The protein is Transmembrane protein 120A of Homo sapiens (Human).